The following is a 311-amino-acid chain: Mediator of RNA polymerase II transcription subunit 27 (311 aa).

It belongs to the Mediator complex subunit 27 family. As to quaternary structure, component of the Mediator complex.

The protein resides in the nucleus. Component of the Mediator complex, a coactivator involved in the regulated transcription of nearly all RNA polymerase II-dependent genes. Mediator functions as a bridge to convey information from gene-specific regulatory proteins to the basal RNA polymerase II transcription machinery. Mediator is recruited to promoters by direct interactions with regulatory proteins and serves as a scaffold for the assembly of a functional preinitiation complex with RNA polymerase II and the general transcription factors. This Xenopus tropicalis (Western clawed frog) protein is Mediator of RNA polymerase II transcription subunit 27 (med27).